Here is a 118-residue protein sequence, read N- to C-terminus: UPF0342 protein BCE_0953 (118 aa).

It belongs to the UPF0342 family.

The sequence is that of UPF0342 protein BCE_0953 from Bacillus cereus (strain ATCC 10987 / NRS 248).